The chain runs to 524 residues: Na(+)/H(+) antiporter NhaB (524 aa).

Transmembrane regions (helical) follow at residues 13–33, 98–118, 140–160, 239–259, 304–324, 325–345, 358–378, 448–468, and 479–499; these read FLGN…IINP, LLLV…LFVF, AFLS…SVSV, FFIR…LVCL, AIIG…VGLV, GLSV…HSLG, LTVF…TPII, ATPN…APLI, and ALPY…FLLV.

This sequence belongs to the NhaB Na(+)/H(+) (TC 2.A.34) antiporter family.

The protein localises to the cell inner membrane. It carries out the reaction 2 Na(+)(in) + 3 H(+)(out) = 2 Na(+)(out) + 3 H(+)(in). In terms of biological role, na(+)/H(+) antiporter that extrudes sodium in exchange for external protons. The polypeptide is Na(+)/H(+) antiporter NhaB (Yersinia pestis (strain Pestoides F)).